The primary structure comprises 332 residues: Tetraacyldisaccharide 4'-kinase (332 aa).

52 to 59 (TLGGAGKT) is a binding site for ATP.

Belongs to the LpxK family.

It catalyses the reaction a lipid A disaccharide + ATP = a lipid IVA + ADP + H(+). Its pathway is glycolipid biosynthesis; lipid IV(A) biosynthesis; lipid IV(A) from (3R)-3-hydroxytetradecanoyl-[acyl-carrier-protein] and UDP-N-acetyl-alpha-D-glucosamine: step 6/6. Its function is as follows. Transfers the gamma-phosphate of ATP to the 4'-position of a tetraacyldisaccharide 1-phosphate intermediate (termed DS-1-P) to form tetraacyldisaccharide 1,4'-bis-phosphate (lipid IVA). This Methylobacterium sp. (strain 4-46) protein is Tetraacyldisaccharide 4'-kinase.